Reading from the N-terminus, the 82-residue chain is Small ribosomal subunit protein bS16 (82 aa).

Belongs to the bacterial ribosomal protein bS16 family.

The polypeptide is Small ribosomal subunit protein bS16 (Shigella boydii serotype 18 (strain CDC 3083-94 / BS512)).